Here is a 118-residue protein sequence, read N- to C-terminus: Large ribosomal subunit protein eL18 (118 aa).

Belongs to the eukaryotic ribosomal protein eL18 family.

The sequence is that of Large ribosomal subunit protein eL18 (rpl18e) from Sulfolobus acidocaldarius (strain ATCC 33909 / DSM 639 / JCM 8929 / NBRC 15157 / NCIMB 11770).